The chain runs to 161 residues: DNA-directed RNA polymerase 18 kDa subunit (161 aa).

It belongs to the poxviridae DNA-directed RNA polymerase 18 kDa subunit family. The DNA-dependent RNA polymerase used for intermediate and late genes expression consists of eight subunits 147 kDa, 133 kDa, 35 kDa, 30 kDa, 22 kDa, 19 kDa, 18 kDa and 7 kDa totalling more than 500 kDa in mass. The same holoenzyme, with the addition of the transcription-specificity factor RAP94, is used for early gene expression.

It localises to the virion. It catalyses the reaction RNA(n) + a ribonucleoside 5'-triphosphate = RNA(n+1) + diphosphate. Its function is as follows. Part of the DNA-dependent RNA polymerase which catalyzes the transcription of viral DNA into RNA using the four ribonucleoside triphosphates as substrates. Responsible for the transcription of early, intermediate and late genes. DNA-dependent RNA polymerase associates with the early transcription factor (ETF) thereby allowing the early genes transcription. Late transcription, and probably also intermediate transcription, require newly synthesized RNA polymerase. This chain is DNA-directed RNA polymerase 18 kDa subunit (RPO18), found in Vertebrata (FPV).